Reading from the N-terminus, the 567-residue chain is Oxygen-dependent choline dehydrogenase (567 aa).

An FAD-binding site is contributed by 6-35; that stretch reads DYIIVGAGSAGNTLATRLTEDEGVTVLLLE. His475 acts as the Proton acceptor in catalysis.

It belongs to the GMC oxidoreductase family. It depends on FAD as a cofactor.

The catalysed reaction is choline + A = betaine aldehyde + AH2. It carries out the reaction betaine aldehyde + NAD(+) + H2O = glycine betaine + NADH + 2 H(+). It functions in the pathway amine and polyamine biosynthesis; betaine biosynthesis via choline pathway; betaine aldehyde from choline (cytochrome c reductase route): step 1/1. In terms of biological role, involved in the biosynthesis of the osmoprotectant glycine betaine. Catalyzes the oxidation of choline to betaine aldehyde and betaine aldehyde to glycine betaine at the same rate. In Pseudomonas fluorescens (strain Pf0-1), this protein is Oxygen-dependent choline dehydrogenase.